Reading from the N-terminus, the 501-residue chain is L-lysine transport protein (501 aa).

13 consecutive transmembrane segments (helical) span residues Leu-25–Ile-41, Gly-52–Ala-76, Val-92–Ala-113, Phe-138–Val-155, Ile-174–Trp-191, Gly-214–Tyr-232, Val-247–Thr-269, Trp-292–Cys-316, Gly-340–Leu-362, Leu-377–Ala-393, Leu-424–Ala-440, Leu-447–Thr-463, and Ile-477–Val-495.

This sequence belongs to the amino acid-polyamine-organocation (APC) superfamily. Basic amino acid/polyamine antiporter (APA) (TC 2.A.3.2) family.

The protein localises to the cell membrane. Its function is as follows. Permease that is involved in the transport across the membrane of lysine. The chain is L-lysine transport protein (lysI) from Corynebacterium glutamicum (strain ATCC 13032 / DSM 20300 / JCM 1318 / BCRC 11384 / CCUG 27702 / LMG 3730 / NBRC 12168 / NCIMB 10025 / NRRL B-2784 / 534).